The following is a 379-amino-acid chain: Cytochrome b (379 aa).

4 helical membrane-spanning segments follow: residues 33–53 (FGSL…FLAM), 77–98 (WLIR…FIHV), 113–133 (WNIG…GYVL), and 178–198 (FFAF…VHLL). Positions 83 and 97 each coordinate heme b. The heme b site is built by histidine 182 and histidine 196. Histidine 201 is an a ubiquinone binding site. Helical transmembrane passes span 226 to 246 (TKDL…VLFF), 288 to 308 (LGGV…PLLN), 320 to 340 (VTQV…WIGG), and 347 to 367 (FTTI…ILIP).

Belongs to the cytochrome b family. In terms of assembly, the cytochrome bc1 complex contains 11 subunits: 3 respiratory subunits (MT-CYB, CYC1 and UQCRFS1), 2 core proteins (UQCRC1 and UQCRC2) and 6 low-molecular weight proteins (UQCRH/QCR6, UQCRB/QCR7, UQCRQ/QCR8, UQCR10/QCR9, UQCR11/QCR10 and a cleavage product of UQCRFS1). This cytochrome bc1 complex then forms a dimer. Heme b serves as cofactor.

The protein resides in the mitochondrion inner membrane. In terms of biological role, component of the ubiquinol-cytochrome c reductase complex (complex III or cytochrome b-c1 complex) that is part of the mitochondrial respiratory chain. The b-c1 complex mediates electron transfer from ubiquinol to cytochrome c. Contributes to the generation of a proton gradient across the mitochondrial membrane that is then used for ATP synthesis. The protein is Cytochrome b (MT-CYB) of Akodon cursor (Cursor grass mouse).